Here is a 288-residue protein sequence, read N- to C-terminus: MYTEGFIDVTGGRVSFQKFDENGGGTPVIVLHGGPGSSCYSLLGLKALAKDRPVILYDQLGCGKSDRPMDTTLWRLDRFVEELAQIRQALNLDEVHILGHSWGTTLAAAYCLTKPSGVKSVIFSSPCLSAPLWEQDQKRNLKKLPLDVQETINRCEENGTTDSEEFAAAIEVFGKHFVNRLEKQPEWLEQKPSGYRNADIYNIMWGPSEFTVLGNLKNFDCTTQLKEITCPSLYTCGRFDEATPETTEYYSSLTPKSKFHVFEKSAHMPYIEEPEEYLAVIGDFLNSI.

In terms of domain architecture, AB hydrolase-1 spans 27 to 274 (PVIVLHGGPG…SAHMPYIEEP (248 aa)). S101 functions as the Nucleophile in the catalytic mechanism. The active site involves D240. Residue H267 is the Proton donor of the active site.

The protein belongs to the peptidase S33 family. In terms of assembly, monomer.

It is found in the cytoplasm. It carries out the reaction Release of N-terminal proline from a peptide.. Its activity is regulated as follows. Completely inhibited by p-chloromercuribenzoate (PCMB) and heavy metal salts. Partially inhibited by proline and proline derivatives with proline as the amino terminus. Enzyme inactivated by PCMB is reactivated by incubation with 2-mercaptoethanol. Releases the N-terminal proline from various substrates including at least dipeptides Pro-Pro, Pro-Gln, Pro-Trp and Pro-Tyr. Also acts on amides (Pro-beta NA) and oligopeptides including Pro-Leu-GlyNH2, Pro-Leu-Gly, Pro-Phe-Gly-Lys, Pro-Pro-Ala-OBut and Pro-Pro-Gly-(Pro-Pro-Gly)(4). Higher activity toward small peptides (up to three residues), but very low activity for longer peptides. Has no activity against p-nitrophenyl acetate, poly_L-proline, Met-Pro or amino acyl amides other than Pro-betaNA (Pyr-betaNA, Phe-betaNA, Cys-betaNA, Met-betaNA, Leu-betaNA, Ala-betaNA and Z-Gly-Pro-betaNA). The protein is Proline iminopeptidase (pip) of Heyndrickxia coagulans (Weizmannia coagulans).